A 404-amino-acid chain; its full sequence is Ubiquitin-like modifier-activating enzyme 5 (404 aa).

Position 45 is a phosphoserine (Ser45). Residues Gly83, Asp104, Lys127, Asn150, and Asn184 each contribute to the ATP site. Zn(2+) is bound by residues Cys226 and Cys229. Residue Cys250 is the Glycyl thioester intermediate of the active site. 2 residues coordinate Zn(2+): Cys303 and Cys308. Positions 334–346 match the UFM1-interacting sequence (UIS) motif; sequence IIHEDNEWGIELV. The interval 347 to 377 is linker; the sequence is SEVSEEELKNSSGPVPDLPEGITVAYTIPKK. A phosphoserine mark is found at Ser358 and Ser393. The UFC1-binding sequence (UFC) motif lies at 389–404; sequence DSGESLEDLMAKMKNM.

Belongs to the ubiquitin-activating E1 family. UBA5 subfamily. Homodimer; homodimerization is required for UFM1 activation. Interacts (via UIS motif) with UFM1; binds UFM1 via a trans-binding mechanism in which UFM1 interacts with distinct sites in both subunits of the UBA5 homodimer. Interacts (via C-terminus) with UFC1. Interacts (via UIS motif) with GABARAPL2 and, with lower affinity, with GABARAP and GABARAPL1.

It is found in the cytoplasm. The protein localises to the nucleus. It localises to the endoplasmic reticulum membrane. Its subcellular location is the golgi apparatus. Its function is as follows. E1-like enzyme which specifically catalyzes the first step in ufmylation. Activates UFM1 by first adenylating its C-terminal glycine residue with ATP, and thereafter linking this residue to the side chain of a cysteine residue in E1, yielding a UFM1-E1 thioester and free AMP. Activates UFM1 via a trans-binding mechanism, in which UFM1 interacts with distinct sites in both subunits of the UBA5 homodimer. Trans-binding also promotes stabilization of the UBA5 homodimer, and enhances ATP-binding. Transfer of UFM1 from UBA5 to the E2-like enzyme UFC1 also takes place using a trans mechanism. Ufmylation plays a key role in various processes, such as ribosome recycling, response to DNA damage, interferon response or reticulophagy (also called ER-phagy). Ufmylation is essential for erythroid differentiation of both megakaryocytes and erythrocytes. The protein is Ubiquitin-like modifier-activating enzyme 5 of Pongo abelii (Sumatran orangutan).